The following is a 202-amino-acid chain: Imidazoleglycerol-phosphate dehydratase (202 aa).

The protein belongs to the imidazoleglycerol-phosphate dehydratase family.

The protein resides in the cytoplasm. The catalysed reaction is D-erythro-1-(imidazol-4-yl)glycerol 3-phosphate = 3-(imidazol-4-yl)-2-oxopropyl phosphate + H2O. It functions in the pathway amino-acid biosynthesis; L-histidine biosynthesis; L-histidine from 5-phospho-alpha-D-ribose 1-diphosphate: step 6/9. The sequence is that of Imidazoleglycerol-phosphate dehydratase from Corynebacterium glutamicum (strain ATCC 13032 / DSM 20300 / JCM 1318 / BCRC 11384 / CCUG 27702 / LMG 3730 / NBRC 12168 / NCIMB 10025 / NRRL B-2784 / 534).